The sequence spans 164 residues: MTNGNGAPPEAAQAPQLNVLAQYTKDLSFENPNAPASLAPQAQQPSINIQINVTANTLADSEFEVTLAIEGKADNAGSLIFSFELLYAGVFRILNVPKENLHPLVMIECPRLLFPFAREIIATAVRDGGFPPLMLDPVDFVGLYRQNMERQAAAAASADEAKPS.

Belongs to the SecB family. In terms of assembly, homotetramer, a dimer of dimers. One homotetramer interacts with 1 SecA dimer.

Its subcellular location is the cytoplasm. In terms of biological role, one of the proteins required for the normal export of preproteins out of the cell cytoplasm. It is a molecular chaperone that binds to a subset of precursor proteins, maintaining them in a translocation-competent state. It also specifically binds to its receptor SecA. The protein is Protein-export protein SecB of Rhodopseudomonas palustris (strain BisB18).